The sequence spans 288 residues: Phosphatidylserine decarboxylase proenzyme (288 aa).

Active-site charge relay system; for autoendoproteolytic cleavage activity residues include D88, H145, and S248. The active-site Schiff-base intermediate with substrate; via pyruvic acid; for decarboxylase activity is the S248. Pyruvic acid (Ser); by autocatalysis is present on S248.

Belongs to the phosphatidylserine decarboxylase family. PSD-B subfamily. Prokaryotic type I sub-subfamily. Heterodimer of a large membrane-associated beta subunit and a small pyruvoyl-containing alpha subunit. The cofactor is pyruvate. In terms of processing, is synthesized initially as an inactive proenzyme. Formation of the active enzyme involves a self-maturation process in which the active site pyruvoyl group is generated from an internal serine residue via an autocatalytic post-translational modification. Two non-identical subunits are generated from the proenzyme in this reaction, and the pyruvate is formed at the N-terminus of the alpha chain, which is derived from the carboxyl end of the proenzyme. The autoendoproteolytic cleavage occurs by a canonical serine protease mechanism, in which the side chain hydroxyl group of the serine supplies its oxygen atom to form the C-terminus of the beta chain, while the remainder of the serine residue undergoes an oxidative deamination to produce ammonia and the pyruvoyl prosthetic group on the alpha chain. During this reaction, the Ser that is part of the protease active site of the proenzyme becomes the pyruvoyl prosthetic group, which constitutes an essential element of the active site of the mature decarboxylase.

The protein resides in the cell membrane. It catalyses the reaction a 1,2-diacyl-sn-glycero-3-phospho-L-serine + H(+) = a 1,2-diacyl-sn-glycero-3-phosphoethanolamine + CO2. It functions in the pathway phospholipid metabolism; phosphatidylethanolamine biosynthesis; phosphatidylethanolamine from CDP-diacylglycerol: step 2/2. Functionally, catalyzes the formation of phosphatidylethanolamine (PtdEtn) from phosphatidylserine (PtdSer). The sequence is that of Phosphatidylserine decarboxylase proenzyme from Azoarcus sp. (strain BH72).